Here is a 304-residue protein sequence, read N- to C-terminus: N-acetylmuramic acid 6-phosphate etherase (304 aa).

The 164-residue stretch at 62–225 (IVEAFQQGGR…TTASMILIGK (164 aa)) folds into the SIS domain. Residue Glu90 is the Proton donor of the active site. Residue Glu121 is part of the active site.

Belongs to the GCKR-like family. MurNAc-6-P etherase subfamily. In terms of assembly, homodimer.

It carries out the reaction N-acetyl-D-muramate 6-phosphate + H2O = N-acetyl-D-glucosamine 6-phosphate + (R)-lactate. It participates in amino-sugar metabolism; 1,6-anhydro-N-acetylmuramate degradation. Its pathway is amino-sugar metabolism; N-acetylmuramate degradation. It functions in the pathway cell wall biogenesis; peptidoglycan recycling. Its function is as follows. Specifically catalyzes the cleavage of the D-lactyl ether substituent of MurNAc 6-phosphate, producing GlcNAc 6-phosphate and D-lactate. Together with AnmK, is also required for the utilization of anhydro-N-acetylmuramic acid (anhMurNAc) either imported from the medium or derived from its own cell wall murein, and thus plays a role in cell wall recycling. The protein is N-acetylmuramic acid 6-phosphate etherase of Glaesserella parasuis serovar 5 (strain SH0165) (Haemophilus parasuis).